The following is a 378-amino-acid chain: Cytochrome b (378 aa).

Helical transmembrane passes span Phe-34–Met-54, Trp-78–Val-99, Trp-114–Leu-134, and Phe-179–Leu-199. Heme b-binding residues include His-84 and His-98. Residues His-183 and His-197 each coordinate heme b. His-202 contacts a ubiquinone. 4 helical membrane-spanning segments follow: residues Tyr-227–Phe-247, Leu-289–His-309, Leu-321–Ala-341, and Tyr-348–Leu-368.

It belongs to the cytochrome b family. In terms of assembly, the main subunits of complex b-c1 are: cytochrome b, cytochrome c1 and the Rieske protein. The cofactor is heme b.

The protein resides in the mitochondrion inner membrane. Functionally, component of the ubiquinol-cytochrome c reductase complex (complex III or cytochrome b-c1 complex) that is part of the mitochondrial respiratory chain. The b-c1 complex mediates electron transfer from ubiquinol to cytochrome c. Contributes to the generation of a proton gradient across the mitochondrial membrane that is then used for ATP synthesis. The sequence is that of Cytochrome b (MT-CYB) from Anopheles quadrimaculatus (Common malaria mosquito).